The chain runs to 295 residues: Ankyrin repeat and SOCS box protein 17 (295 aa).

The stretch at 146 to 176 (SGITPLLYVAQTRQSNILKILLQYGILEREK) is one ANK repeat. The region spanning 243-295 (DYIPPTRYKDPCELVHLCRITIRTQLLANNMLPNGIFSLLIPTRLQNFLNLES) is the SOCS box domain.

This sequence belongs to the ankyrin SOCS box (ASB) family. In terms of tissue distribution, specifically expressed in testis. Localizes to spermatogenic cells in testis, with highest expression in round spermatids and condensing spermatids and lower expression in pachytene spermatocytes.

It participates in protein modification; protein ubiquitination. May be a substrate-recognition component of a SCF-like ECS (Elongin-Cullin-SOCS-box protein) E3 ubiquitin-protein ligase complex which mediates the ubiquitination and subsequent proteasomal degradation of target proteins. This Mus musculus (Mouse) protein is Ankyrin repeat and SOCS box protein 17 (Asb17).